The following is a 661-amino-acid chain: UvrABC system protein B (661 aa).

The Helicase ATP-binding domain maps to 25-182 (AGLSSKKRSQ…NDLINLQYER (158 aa)). 38-45 (GITGSGKT) serves as a coordination point for ATP. Positions 91 to 114 (YYDYYQPEAYIARTDTFIEKDSSI) match the Beta-hairpin motif. In terms of domain architecture, Helicase C-terminal spans 430–592 (QVEDLISEIQ…IIPKTINRAI (163 aa)). A UVR domain is found at 621–656 (KTHIDKLKKEMLKAASNLEFEQAVKLRDQLKTLEAA).

It belongs to the UvrB family. As to quaternary structure, forms a heterotetramer with UvrA during the search for lesions. Interacts with UvrC in an incision complex.

The protein localises to the cytoplasm. Functionally, the UvrABC repair system catalyzes the recognition and processing of DNA lesions. A damage recognition complex composed of 2 UvrA and 2 UvrB subunits scans DNA for abnormalities. Upon binding of the UvrA(2)B(2) complex to a putative damaged site, the DNA wraps around one UvrB monomer. DNA wrap is dependent on ATP binding by UvrB and probably causes local melting of the DNA helix, facilitating insertion of UvrB beta-hairpin between the DNA strands. Then UvrB probes one DNA strand for the presence of a lesion. If a lesion is found the UvrA subunits dissociate and the UvrB-DNA preincision complex is formed. This complex is subsequently bound by UvrC and the second UvrB is released. If no lesion is found, the DNA wraps around the other UvrB subunit that will check the other stand for damage. The protein is UvrABC system protein B of Rickettsia peacockii (strain Rustic).